The following is a 349-amino-acid chain: 26S proteasome non-ATPase regulatory subunit 4 (349 aa).

The VWFA domain occupies 5–188 (ATIVCLDNSE…LSDIILQSPI (184 aa)). Positions 204-223 (DTDPDLAMALKLSLEEEKQR) constitute a UIM 1 domain. Basic and acidic residues predominate over residues 219–234 (EEKQRQERERKAREEA). 2 disordered regions span residues 219–257 (EEKQ…MDVN) and 274–349 (TDKM…NEKK). The span at 235–253 (NGGSTNSGTTTTTAPTESN) shows a compositional bias: low complexity. The region spanning 259–278 (EDDPELAEALALSMATDKME) is the UIM 2 domain. Residues 280–301 (QSSTTNTDSQPPQQQQQPPTDD) are compositionally biased toward low complexity. Residues 335–349 (LSKKDEDKDKDNEKK) are compositionally biased toward basic and acidic residues.

Belongs to the proteasome subunit S5A family. The 26S proteasome is composed of a core protease, known as the 20S proteasome, capped at one or both ends by the 19S regulatory complex (RC). The RC is composed of at least 18 different subunits in two subcomplexes, the base and the lid, which form the portions proximal and distal to the 20S proteolytic core, respectively.

Its function is as follows. Binds and presumably selects ubiquitin-conjugates for destruction. The chain is 26S proteasome non-ATPase regulatory subunit 4 (psmD4) from Dictyostelium discoideum (Social amoeba).